The following is a 1088-amino-acid chain: DNA polymerase II large subunit (1088 aa).

It belongs to the archaeal DNA polymerase II family. Heterodimer of a large subunit and a small subunit.

The enzyme catalyses DNA(n) + a 2'-deoxyribonucleoside 5'-triphosphate = DNA(n+1) + diphosphate. It catalyses the reaction Exonucleolytic cleavage in the 3'- to 5'-direction to yield nucleoside 5'-phosphates.. Functionally, possesses two activities: a DNA synthesis (polymerase) and an exonucleolytic activity that degrades single-stranded DNA in the 3'- to 5'-direction. Has a template-primer preference which is characteristic of a replicative DNA polymerase. The sequence is that of DNA polymerase II large subunit (polC) from Thermoplasma volcanium (strain ATCC 51530 / DSM 4299 / JCM 9571 / NBRC 15438 / GSS1).